We begin with the raw amino-acid sequence, 288 residues long: Large ribosomal subunit protein uL2 (288 aa).

Residues 29–43 (PEKSLTRGFKRDKGR) show a composition bias toward basic and acidic residues. Disordered regions lie at residues 29 to 59 (PEKS…GGHK) and 210 to 288 (GRNR…GRQS). 2 stretches are compositionally biased toward basic residues: residues 210–221 (GRNRWKGRRPKV) and 272–288 (VRRR…GRQS).

This sequence belongs to the universal ribosomal protein uL2 family. In terms of assembly, part of the 50S ribosomal subunit. Forms a bridge to the 30S subunit in the 70S ribosome.

Its function is as follows. One of the primary rRNA binding proteins. Required for association of the 30S and 50S subunits to form the 70S ribosome, for tRNA binding and peptide bond formation. It has been suggested to have peptidyltransferase activity; this is somewhat controversial. Makes several contacts with the 16S rRNA in the 70S ribosome. The polypeptide is Large ribosomal subunit protein uL2 (Thermosynechococcus vestitus (strain NIES-2133 / IAM M-273 / BP-1)).